A 1131-amino-acid chain; its full sequence is PPi-type phosphoenolpyruvate carboxykinase (1131 aa).

Belongs to the PPi-type phosphoenolpyruvate carboxykinase family. In terms of assembly, monomer and trimer; forms heterotrimers with PEPCK2 and PEPCK3.

The catalysed reaction is oxaloacetate + diphosphate = phosphoenolpyruvate + phosphate + CO2. In terms of biological role, inorganic pyrophosphate (PPi)-dependent phosphoenolpyruvate carboxykinase, which regulates the carbon flow of the central metabolism by fixing CO(2) to phosphoenolpyruvate to produce oxaloacetate. Can also produce pyruvate and diphosphate from phosphoenolpyruvate and phosphate. The sequence is that of PPi-type phosphoenolpyruvate carboxykinase from Propionibacterium freudenreichii subsp. freudenreichii.